The following is a 163-amino-acid chain: Ribosome maturation factor RimP (163 aa).

It belongs to the RimP family.

It localises to the cytoplasm. In terms of biological role, required for maturation of 30S ribosomal subunits. This Polynucleobacter necessarius subsp. necessarius (strain STIR1) protein is Ribosome maturation factor RimP.